The following is a 271-amino-acid chain: Solute carrier family 66 member 2 (271 aa).

Helical transmembrane passes span 7–27, 49–69, and 72–92; these read GWLL…AMVF, FSTH…LFWF, and HFES…LLML. In terms of domain architecture, PQ-loop 1 spans 14 to 80; that stretch reads HQLVSWVAAG…RHFESPLLWQ (67 aa). Ser110 is subject to Phosphoserine. The next 3 helical transmembrane spans lie at 143-163, 168-188, and 232-252; these read FADY…ITYL, ALFV…LGVP, and VCGL…YAFA. One can recognise a PQ-loop 2 domain in the interval 149 to 215; the sequence is CVLAFTGVAG…MVLMWTSGDT (67 aa).

Its subcellular location is the membrane. This Rattus norvegicus (Rat) protein is Solute carrier family 66 member 2 (Slc66a2).